Here is a 336-residue protein sequence, read N- to C-terminus: Biotin synthase (336 aa).

Residues 57–286 (HHGKSIDLCS…RAIVRTAGGR (230 aa)) enclose the Radical SAM core domain. Positions 75, 79, and 82 each coordinate [4Fe-4S] cluster. Residues serine 119, cysteine 151, cysteine 211, and arginine 281 each coordinate [2Fe-2S] cluster.

The protein belongs to the radical SAM superfamily. Biotin synthase family. In terms of assembly, homodimer. It depends on [4Fe-4S] cluster as a cofactor. Requires [2Fe-2S] cluster as cofactor.

The enzyme catalyses (4R,5S)-dethiobiotin + (sulfur carrier)-SH + 2 reduced [2Fe-2S]-[ferredoxin] + 2 S-adenosyl-L-methionine = (sulfur carrier)-H + biotin + 2 5'-deoxyadenosine + 2 L-methionine + 2 oxidized [2Fe-2S]-[ferredoxin]. Its pathway is cofactor biosynthesis; biotin biosynthesis; biotin from 7,8-diaminononanoate: step 2/2. Functionally, catalyzes the conversion of dethiobiotin (DTB) to biotin by the insertion of a sulfur atom into dethiobiotin via a radical-based mechanism. This is Biotin synthase from Desulfotalea psychrophila (strain LSv54 / DSM 12343).